The following is a 173-amino-acid chain: MTETANLFVLGAAGGVEWGTVIVQVLTFIVLLALLKKFAWGPLKDVMDKRERDINRDIDDAEQAKLNAQKLEEENKQKLKETQEEVQKILEDAKVQARQQQEQIIHEANVRANGMIETAQSEINSQKERAIADINNQVSELSVLIASKVLRKEISEQDQKALVDKYLKEAGDK.

The chain crosses the membrane as a helical span at residues 15 to 35 (GVEWGTVIVQVLTFIVLLALL).

The protein belongs to the ATPase B chain family. In terms of assembly, F-type ATPases have 2 components, F(1) - the catalytic core - and F(0) - the membrane proton channel. F(1) has five subunits: alpha(3), beta(3), gamma(1), delta(1), epsilon(1). F(0) has three main subunits: a(1), b(2) and c(10-14). The alpha and beta chains form an alternating ring which encloses part of the gamma chain. F(1) is attached to F(0) by a central stalk formed by the gamma and epsilon chains, while a peripheral stalk is formed by the delta and b chains.

The protein resides in the cell membrane. F(1)F(0) ATP synthase produces ATP from ADP in the presence of a proton or sodium gradient. F-type ATPases consist of two structural domains, F(1) containing the extramembraneous catalytic core and F(0) containing the membrane proton channel, linked together by a central stalk and a peripheral stalk. During catalysis, ATP synthesis in the catalytic domain of F(1) is coupled via a rotary mechanism of the central stalk subunits to proton translocation. Functionally, component of the F(0) channel, it forms part of the peripheral stalk, linking F(1) to F(0). This chain is ATP synthase subunit b, found in Staphylococcus aureus (strain MSSA476).